A 147-amino-acid polypeptide reads, in one-letter code: Large ribosomal subunit protein uL15 (147 aa).

Positions 1–42 are disordered; sequence MTIKLHHLRPAPGAKTDKTRVGRGEGSKGKTAGRGTKGTKAR. The span at 15-28 shows a compositional bias: basic and acidic residues; it reads KTDKTRVGRGEGSK.

Belongs to the universal ribosomal protein uL15 family. As to quaternary structure, part of the 50S ribosomal subunit.

Binds to the 23S rRNA. The sequence is that of Large ribosomal subunit protein uL15 from Nocardia farcinica (strain IFM 10152).